Consider the following 229-residue polypeptide: MNHSPIIIALDFPQKEPALTCAKQLSPQHCRLKIGSELFTREGAPLIAQLRELGFEIFLDLKFHDIPNTVAAAVRVAADLGVWMVNVHASGGLAMMQAAKEAATAAKQAPLLTAVTVLTSFDDAALGSVGVDDLMESQVQRLARLAFTAGLDGVVCSAAEVPVIKKSTAPQFLTVTPGIRPQQSAHDDQKRVFTPKEALAQGSDYLVIGRPITRAADPAQALNAIMATL.

Substrate-binding positions include aspartate 11, lysine 33, 60 to 69 (DLKFHDIPNT), threonine 119, arginine 180, glutamine 189, glycine 209, and arginine 210. The active-site Proton donor is the lysine 62.

This sequence belongs to the OMP decarboxylase family. Type 1 subfamily. In terms of assembly, homodimer.

It carries out the reaction orotidine 5'-phosphate + H(+) = UMP + CO2. The protein operates within pyrimidine metabolism; UMP biosynthesis via de novo pathway; UMP from orotate: step 2/2. In terms of biological role, catalyzes the decarboxylation of orotidine 5'-monophosphate (OMP) to uridine 5'-monophosphate (UMP). The chain is Orotidine 5'-phosphate decarboxylase from Dichelobacter nodosus (strain VCS1703A).